We begin with the raw amino-acid sequence, 293 residues long: Ribosomal protein L11 methyltransferase (293 aa).

4 residues coordinate S-adenosyl-L-methionine: Thr145, Gly166, Asp188, and Asn230.

It belongs to the methyltransferase superfamily. PrmA family.

It localises to the cytoplasm. It catalyses the reaction L-lysyl-[protein] + 3 S-adenosyl-L-methionine = N(6),N(6),N(6)-trimethyl-L-lysyl-[protein] + 3 S-adenosyl-L-homocysteine + 3 H(+). Its function is as follows. Methylates ribosomal protein L11. This Actinobacillus pleuropneumoniae serotype 7 (strain AP76) protein is Ribosomal protein L11 methyltransferase.